A 155-amino-acid chain; its full sequence is uncharacterized protein (155 aa).

A helical membrane pass occupies residues G5 to K25.

Its subcellular location is the membrane. This is an uncharacterized protein from Acheta domesticus (House cricket).